A 431-amino-acid chain; its full sequence is Adenylosuccinate lyase (431 aa).

N(6)-(1,2-dicarboxyethyl)-AMP is bound by residues Arg4–Tyr5, Arg67–Asp69, and Thr93–Ser94. The Proton donor/acceptor role is filled by His141. N(6)-(1,2-dicarboxyethyl)-AMP is bound at residue Gln212. The active-site Proton donor/acceptor is the Ser262. N(6)-(1,2-dicarboxyethyl)-AMP is bound by residues Ser263, Lys268–Asn270, Asn276, and Ser307–Ile311.

It belongs to the lyase 1 family. Adenylosuccinate lyase subfamily. In terms of assembly, homodimer and homotetramer. Residues from neighboring subunits contribute catalytic and substrate-binding residues to each active site.

It carries out the reaction N(6)-(1,2-dicarboxyethyl)-AMP = fumarate + AMP. It catalyses the reaction (2S)-2-[5-amino-1-(5-phospho-beta-D-ribosyl)imidazole-4-carboxamido]succinate = 5-amino-1-(5-phospho-beta-D-ribosyl)imidazole-4-carboxamide + fumarate. It functions in the pathway purine metabolism; AMP biosynthesis via de novo pathway; AMP from IMP: step 2/2. Its pathway is purine metabolism; IMP biosynthesis via de novo pathway; 5-amino-1-(5-phospho-D-ribosyl)imidazole-4-carboxamide from 5-amino-1-(5-phospho-D-ribosyl)imidazole-4-carboxylate: step 2/2. Catalyzes two reactions in de novo purine nucleotide biosynthesis. Catalyzes the breakdown of 5-aminoimidazole- (N-succinylocarboxamide) ribotide (SAICAR or 2-[5-amino-1-(5-phospho-beta-D-ribosyl)imidazole-4-carboxamido]succinate) to 5-aminoimidazole-4-carboxamide ribotide (AICAR or 5-amino-1-(5-phospho-beta-D-ribosyl)imidazole-4-carboxamide) and fumarate, and of adenylosuccinate (ADS or N(6)-(1,2-dicarboxyethyl)-AMP) to adenosine monophosphate (AMP) and fumarate. The polypeptide is Adenylosuccinate lyase (purB) (Staphylococcus haemolyticus (strain JCSC1435)).